Consider the following 99-residue polypeptide: NADH-quinone oxidoreductase subunit K (99 aa).

The next 3 membrane-spanning stretches (helical) occupy residues 3 to 23 (PINYLYLSALLFTIGAAGVLL), 28 to 48 (IVMFMCVELMLNAVNLAFVTF), and 59 to 79 (MIAFFTMVVAACEVVIGLAII).

It belongs to the complex I subunit 4L family. As to quaternary structure, NDH-1 is composed of 14 different subunits. Subunits NuoA, H, J, K, L, M, N constitute the membrane sector of the complex.

The protein resides in the cell membrane. The enzyme catalyses a quinone + NADH + 5 H(+)(in) = a quinol + NAD(+) + 4 H(+)(out). In terms of biological role, NDH-1 shuttles electrons from NADH, via FMN and iron-sulfur (Fe-S) centers, to quinones in the respiratory chain. The immediate electron acceptor for the enzyme in this species is believed to be a menaquinone. Couples the redox reaction to proton translocation (for every two electrons transferred, four hydrogen ions are translocated across the cytoplasmic membrane), and thus conserves the redox energy in a proton gradient. The chain is NADH-quinone oxidoreductase subunit K from Mycobacterium avium (strain 104).